The following is a 460-amino-acid chain: Cytochrome P450 CYP71D312 (460 aa).

A heme-binding site is contributed by Cys398.

Belongs to the cytochrome P450 family. Requires heme as cofactor.

Its function is as follows. Probable heme-thiolate monooxygenase. This chain is Cytochrome P450 CYP71D312, found in Panax ginseng (Korean ginseng).